Consider the following 459-residue polypeptide: LAS seventeen-binding protein 3 (459 aa).

The disordered stretch occupies residues 219–403; the sequence is RPSNGGRGSF…APTSPSTSSP (185 aa). Position 227 is a phosphoserine (S227). A compositionally biased stretch (acidic residues) spans 229-242; it reads DDDEDDYYDDDDYY. A compositionally biased stretch (low complexity) spans 243 to 262; the sequence is NDIPSSFSSTDASSTRPNTR. Polar residues predominate over residues 289–300; that stretch reads YSRNSRLAPTNS. T298 bears the Phosphothreonine mark. Phosphoserine occurs at positions 300 and 303. The segment covering 340 to 350 has biased composition (acidic residues); the sequence is DEYDDYDDDYE. The span at 351–371 shows a compositional bias: basic and acidic residues; that stretch reads SGYRRGNGRDRTKDREVDDLS. Polar residues predominate over residues 372-391; the sequence is NRFSKSRISSASTPQTSQGR. T393 carries the post-translational modification Phosphothreonine. Over residues 393-403 the composition is skewed to low complexity; the sequence is TAPTSPSTSSP. 3 positions are modified to phosphoserine: S397, S402, and S416. The 60-residue stretch at 400–459 folds into the SH3 domain; it reads TSSPKAVALYSFAGEESGDLPFRKGDVITILKKSDSQNDWWTGRVNGREGIFPANYVELV.

The protein belongs to the SH3YL1 family. In terms of assembly, interacts with LAS17. Phosphorylation of Ser-397 is induced 2-fold in response to mating pheromone.

It is found in the cytoplasm. The polypeptide is LAS seventeen-binding protein 3 (LSB3) (Saccharomyces cerevisiae (strain YJM789) (Baker's yeast)).